Here is a 67-residue protein sequence, read N- to C-terminus: Large ribosomal subunit protein uL29 (67 aa).

Belongs to the universal ribosomal protein uL29 family.

This chain is Large ribosomal subunit protein uL29, found in Sulfurihydrogenibium sp. (strain YO3AOP1).